Here is a 260-residue protein sequence, read N- to C-terminus: Hydroxyethylthiazole kinase (260 aa).

M38 contributes to the substrate binding site. Residues R114 and T159 each coordinate ATP. Position 186 (G186) interacts with substrate.

The protein belongs to the Thz kinase family. It depends on Mg(2+) as a cofactor.

It catalyses the reaction 5-(2-hydroxyethyl)-4-methylthiazole + ATP = 4-methyl-5-(2-phosphooxyethyl)-thiazole + ADP + H(+). It functions in the pathway cofactor biosynthesis; thiamine diphosphate biosynthesis; 4-methyl-5-(2-phosphoethyl)-thiazole from 5-(2-hydroxyethyl)-4-methylthiazole: step 1/1. Functionally, catalyzes the phosphorylation of the hydroxyl group of 4-methyl-5-beta-hydroxyethylthiazole (THZ). The protein is Hydroxyethylthiazole kinase of Helicobacter pylori (strain G27).